A 38-amino-acid chain; its full sequence is Large ribosomal subunit protein bL36 (38 aa).

Belongs to the bacterial ribosomal protein bL36 family.

This chain is Large ribosomal subunit protein bL36, found in Phytoplasma australiense.